Consider the following 179-residue polypeptide: SCAN domain-containing protein 1 (179 aa).

Residues Met-1–Arg-108 form a disordered region. Residues Ala-60–Pro-80 show a composition bias toward low complexity. An SCAN box domain is found at Arg-108–Ala-166.

As to quaternary structure, interacts with ZNF202.

It localises to the nucleus. May regulate transcriptional activity. The sequence is that of SCAN domain-containing protein 1 (SCAND1) from Pongo pygmaeus (Bornean orangutan).